The chain runs to 157 residues: Short-type peptidyl-prolyl cis-trans isomerase (157 aa).

In terms of domain architecture, PPIase FKBP-type spans 1 to 95 (MINLIKKGDY…RDERLIQEIP (95 aa)). An IF region spans residues 86 to 137 (RDERLIQEIPKEMFADADFEPQEGMLILASGIPAKIIKVTDDTVTLDFNHEL).

This sequence belongs to the FKBP-type PPIase family.

The protein localises to the cytoplasm. It carries out the reaction [protein]-peptidylproline (omega=180) = [protein]-peptidylproline (omega=0). Its function is as follows. Catalyzes the cis-trans isomerization of peptidyl prolyl bonds and accelerates protein folding. Also exhibits chaperone-like activity. In Methanocaldococcus jannaschii (strain ATCC 43067 / DSM 2661 / JAL-1 / JCM 10045 / NBRC 100440) (Methanococcus jannaschii), this protein is Short-type peptidyl-prolyl cis-trans isomerase.